We begin with the raw amino-acid sequence, 378 residues long: S-(hydroxymethyl)glutathione dehydrogenase (378 aa).

Zn(2+)-binding residues include C49, H71, C101, C104, C107, C115, and C178.

It belongs to the zinc-containing alcohol dehydrogenase family. Class-III subfamily. In terms of assembly, homodimer. Requires Zn(2+) as cofactor.

It is found in the cytoplasm. The catalysed reaction is S-(hydroxymethyl)glutathione + NADP(+) = S-formylglutathione + NADPH + H(+). It carries out the reaction S-(hydroxymethyl)glutathione + NAD(+) = S-formylglutathione + NADH + H(+). The enzyme catalyses a primary alcohol + NAD(+) = an aldehyde + NADH + H(+). It catalyses the reaction a secondary alcohol + NAD(+) = a ketone + NADH + H(+). The catalysed reaction is S-nitrosoglutathione + NADH + H(+) = S-(hydroxysulfenamide)glutathione + NAD(+). Functionally, has high formaldehyde dehydrogenase activity in the presence of glutathione and catalyzes the oxidation of normal alcohols in a reaction that is not GSH-dependent. In addition, hemithiolacetals other than those formed from GSH, including omega-thiol fatty acids, also are substrates. Also acts as a S-nitroso-glutathione reductase by catalyzing the NADH-dependent reduction of S-nitrosoglutathione. This is S-(hydroxymethyl)glutathione dehydrogenase (frmA) from Haemophilus influenzae (strain ATCC 51907 / DSM 11121 / KW20 / Rd).